A 61-amino-acid chain; its full sequence is Acetylcholinesterase toxin C (61 aa).

Disulfide bonds link C3/C22, C17/C39, C41/C52, and C53/C59.

This sequence belongs to the three-finger toxin family. Short-chain subfamily. Acn-esterase inhibitor sub-subfamily. In terms of tissue distribution, expressed by the venom gland.

The protein resides in the secreted. In terms of biological role, inhibits acetylcholinesterase. The chain is Acetylcholinesterase toxin C from Dendroaspis polylepis polylepis (Black mamba).